The sequence spans 173 residues: Sialic acid TRAP transporter small permease protein SiaQ (173 aa).

4 helical membrane-spanning segments follow: residues 13–33, 46–66, 87–107, and 123–143; these read IEEIITVPLMAALLAVLTWQI, SEELARLLFMYMCLVGCAIAI, LSLVLSLEIAVLVSIGAIIVL, and LGISSSWMNYSLPVGGVFMVF.

Belongs to the TRAP transporter small permease family. In terms of assembly, the complex comprises the extracytoplasmic solute receptor protein SiaP, and the two transmembrane proteins SiaQ and SiaM. SiaQ and SiaM form a tight 1:1 complex.

The protein localises to the cell inner membrane. Functionally, part of the tripartite ATP-independent periplasmic (TRAP) transport system SiaPQM that catalyzes unidirectional Na(+)-dependent sialic acid uptake. The polypeptide is Sialic acid TRAP transporter small permease protein SiaQ (Vibrio cholerae serotype O1 (strain ATCC 39315 / El Tor Inaba N16961)).